Consider the following 691-residue polypeptide: Calcium-binding and coiled-coil domain-containing protein 1 (691 aa).

Residues 1-30 (MEESPLSRAPSRGGVNFLNVARTYIPNTKV) form a p300 KIX-binding region. Residues 1–190 (MEESPLSRAP…VQELERALAT (190 aa)) form an N-terminal AD (CTNNB1 binding site) region. A Phosphoserine modification is found at Ser4. The segment at 45-125 (SDWIGIFKVE…FQFREPRPMD (81 aa)) is interaction with GATA1. Coiled-coil stretches lie at residues 145–205 (KATV…YKGI), 232–339 (ELED…AELE), and 417–514 (QSVE…ADEK). The C-terminal AD (CTNNB1 binding site); interaction with CCAR1 stretch occupies residues 501-691 (RKLEARLEKV…FSTQDPFTFE (191 aa)). Positions 513-604 (EKWNEDATTE…SDSEAEDEKS (92 aa)) are disordered. The UBZ1-type zinc finger occupies 653–679 (WKECPICKERFPAESDKDALEDHMDGH). Cys656, Cys659, His675, and His679 together coordinate Zn(2+).

Belongs to the CALCOCO family. As to quaternary structure, part of a calphoglin complex consisting of CALCOCO1, PPA1 and PGM. Interacts with the bHLH-PAS domains of GRIP1, AHR and ARNT. Interacts with CTNNB1 via both its N- and C-terminal regions. Interacts with EP300. Interacts with CCAR1 (via N-terminus) and GATA1.

The protein localises to the cytoplasm. It is found in the nucleus. Functions as a coactivator for aryl hydrocarbon and nuclear receptors (NR). Recruited to promoters through its contact with the N-terminal basic helix-loop-helix-Per-Arnt-Sim (PAS) domain of transcription factors or coactivators, such as NCOA2. During ER-activation acts synergistically in combination with other NCOA2-binding proteins, such as EP300, CREBBP and CARM1. Involved in the transcriptional activation of target genes in the Wnt/CTNNB1 pathway. Functions as a secondary coactivator in LEF1-mediated transcriptional activation via its interaction with CTNNB1. Coactivator function for nuclear receptors and LEF1/CTNNB1 involves differential utilization of two different activation regions. In association with CCAR1 enhances GATA1- and MED1-mediated transcriptional activation from the gamma-globin promoter during erythroid differentiation of K562 erythroleukemia cells. Functionally, seems to enhance inorganic pyrophosphatase thus activating phosphogluomutase (PMG). Probably functions as a component of the calphoglin complex, which is involved in linking cellular metabolism (phosphate and glucose metabolism) with other core functions including protein synthesis and degradation, calcium signaling and cell growth. The protein is Calcium-binding and coiled-coil domain-containing protein 1 (CALCOCO1) of Pongo abelii (Sumatran orangutan).